The chain runs to 658 residues: Integrator complex subunit 9 (658 aa).

A disordered region spans residues 550 to 574 (KHVLQLPPKPPQPPTSKKRKRVSDD). Residues 566-570 (KKRKR) carry the Nuclear localization signal motif.

It belongs to the metallo-beta-lactamase superfamily. RNA-metabolizing metallo-beta-lactamase-like family. INTS9 subfamily. As to quaternary structure, component of the Integrator complex, composed of core subunits INTS1, INTS2, INTS3, INTS4, INTS5, INTS6, INTS7, INTS8, INTS9/RC74, INTS10, INTS11/CPSF3L, INTS12, INTS13, INTS14 and INTS15. The core complex associates with protein phosphatase 2A subunits PPP2CA and PPP2R1A, to form the Integrator-PP2A (INTAC) complex. INTS9 is part of the RNA endonuclease subcomplex, composed of INTS4, INTS9, INTS11 and inositol hexakisphosphate (InsP6).

The protein localises to the nucleus. It localises to the cytoplasm. Component of the integrator complex, a multiprotein complex that terminates RNA polymerase II (Pol II) transcription in the promoter-proximal region of genes. The integrator complex provides a quality checkpoint during transcription elongation by driving premature transcription termination of transcripts that are unfavorably configured for transcriptional elongation: the complex terminates transcription by (1) catalyzing dephosphorylation of the C-terminal domain (CTD) of Pol II subunit POLR2A/RPB1 and SUPT5H/SPT5, (2) degrading the exiting nascent RNA transcript via endonuclease activity and (3) promoting the release of Pol II from bound DNA. The integrator complex is also involved in terminating the synthesis of non-coding Pol II transcripts, such as enhancer RNAs (eRNAs), small nuclear RNAs (snRNAs), telomerase RNAs and long non-coding RNAs (lncRNAs). The sequence is that of Integrator complex subunit 9 (INTS9) from Gallus gallus (Chicken).